We begin with the raw amino-acid sequence, 256 residues long: DNA repair protein RecO (256 aa).

Belongs to the RecO family.

Functionally, involved in DNA repair and RecF pathway recombination. This chain is DNA repair protein RecO, found in Rhizobium etli (strain ATCC 51251 / DSM 11541 / JCM 21823 / NBRC 15573 / CFN 42).